We begin with the raw amino-acid sequence, 969 residues long: Putative zinc protease mug138 (969 aa).

H68 serves as a coordination point for Zn(2+). Residue E71 is the Proton acceptor of the active site. Residues H72 and E149 each contribute to the Zn(2+) site.

Belongs to the peptidase M16 family.

The protein resides in the cytoplasm. Has a role in meiosis. In Schizosaccharomyces pombe (strain 972 / ATCC 24843) (Fission yeast), this protein is Putative zinc protease mug138 (mug138).